The chain runs to 288 residues: Peroxisomal protein PEX21 (288 aa).

Residue cysteine 5 forms a Glycyl cysteine thioester (Cys-Gly) (interchain with G-Cter in ubiquitin) linkage.

Belongs to the peroxin-21 family. In terms of assembly, interacts with PEX7. Interacts with PEX13. Interacts with SES1. Post-translationally, monoubiquitinated at Cys-5; acts as a signal for PEX21 extraction and is required for proper export from peroxisomes and recycling.

The protein localises to the cytoplasm. It localises to the cytosol. It is found in the peroxisome. Its function is as follows. Receptor that mediates peroxisomal import of proteins containing a C-terminal PTS2-type peroxisomal targeting signal via its interaction with PEX7. Interaction with PEX7 only takes place when PEX7 is associated with cargo proteins containing a PTS2 peroxisomal targeting signal. PEX7 along with PTS2-containing cargo proteins are then translocated through the PEX13-PEX14 docking complex together with PEX21. Acts as an activator of the seryl-tRNA synthetase SES1 by increasing its binding to tRNA. This chain is Peroxisomal protein PEX21 (PEX21), found in Saccharomyces cerevisiae (strain ATCC 204508 / S288c) (Baker's yeast).